A 262-amino-acid polypeptide reads, in one-letter code: Nickel import ATP-binding protein NikD (262 aa).

The region spanning 6-249 is the ABC transporter domain; the sequence is LAIEGLTATT…PGHEVTRMLV (244 aa). 42–49 provides a ligand contact to ATP; that stretch reads GASGSGKS.

The protein belongs to the ABC transporter superfamily. Nickel importer (TC 3.A.1.5.3) family. The complex is composed of two ATP-binding proteins (NikD and NikE), two transmembrane proteins (NikB and NikC) and a solute-binding protein (NikA).

It is found in the cell inner membrane. It catalyses the reaction Ni(2+)(out) + ATP + H2O = Ni(2+)(in) + ADP + phosphate + H(+). Its function is as follows. Part of the ABC transporter complex NikABCDE involved in nickel import. Responsible for energy coupling to the transport system. This chain is Nickel import ATP-binding protein NikD, found in Brucella abortus biovar 1 (strain 9-941).